The chain runs to 205 residues: MLGAKPHWLPGPLHSPGLPLVLVLLALGAGWAQEGSEPVLLEGECLVVCEPGRAAAGGPGGAALGEAPPGRVAFAAVRSHHHEPAGETGNGTSGAIYFDQVLVNEGGGFDRASGSFVAPVRGVYSFRFHVVKVYNRQTVQVSLMLNTWPVISAFANDPDVTREAATSSVLLPLDPGDRVSLRLRRGNLLGGWKYSSFSGFLIFPL.

An N-terminal signal peptide occupies residues 1-32; that stretch reads MLGAKPHWLPGPLHSPGLPLVLVLLALGAGWA. Residues 67-205 form the C1q domain; it reads APPGRVAFAA…SFSGFLIFPL (139 aa). Positions 72-205 are necessary for interaction with CBLN3, and homotrimerization; that stretch reads VAFAAVRSHH…SFSGFLIFPL (134 aa). The N-linked (GlcNAc...) asparagine glycan is linked to Asn-90.

As to quaternary structure, heterohexamer; disulfide-linked heterotrimers. Interacts with CBLN1. May also form oligomers with CBLN2 and CBLN4.

The protein localises to the endoplasmic reticulum. It localises to the golgi apparatus. Its subcellular location is the cis-Golgi network. The protein resides in the secreted. It is found in the synapse. May be involved in synaptic functions in the CNS. The polypeptide is Cerebellin-3 (CBLN3) (Homo sapiens (Human)).